Here is a 152-residue protein sequence, read N- to C-terminus: Ribonuclease H (152 aa).

The RNase H type-1 domain maps to 1-142; that stretch reads MDSKVVIYTD…ADKLAVQGRE (142 aa). Mg(2+) is bound by residues Asp-10, Glu-48, Asp-70, and Asp-134.

The protein belongs to the RNase H family. As to quaternary structure, monomer. Mg(2+) serves as cofactor.

The protein localises to the cytoplasm. The catalysed reaction is Endonucleolytic cleavage to 5'-phosphomonoester.. Functionally, endonuclease that specifically degrades the RNA of RNA-DNA hybrids. This is Ribonuclease H from Rickettsia felis (strain ATCC VR-1525 / URRWXCal2) (Rickettsia azadi).